We begin with the raw amino-acid sequence, 97 residues long: Protein 9b (97 aa).

The 9b domain occupies 8–97 (VPPALHLVDP…PDEFVVVTAK (90 aa)).

Belongs to the coronavirus group 2 protein 9b family. In terms of assembly, homodimer.

It localises to the host cytoplasmic vesicle membrane. Its subcellular location is the host cytoplasm. The chain is Protein 9b from Rhinolophus sinicus (Chinese rufous horseshoe bat).